The sequence spans 165 residues: uncharacterized protein (165 aa).

The interval 49-165 (QLKPQGPKRP…VAQQREIAQK (117 aa)) is disordered. Residues 94–106 (MNNNNNYKISYTS) show a composition bias toward polar residues. A compositionally biased stretch (low complexity) spans 120–135 (TLQRTTPQAQPTPQQP). The segment covering 139 to 157 (SRSSGGITGAVNNRPQMVA) has biased composition (polar residues).

This is an uncharacterized protein from Caenorhabditis elegans.